A 462-amino-acid polypeptide reads, in one-letter code: ATP synthase subunit beta 1 (462 aa).

151–158 (GGAGVGKT) serves as a coordination point for ATP.

This sequence belongs to the ATPase alpha/beta chains family. As to quaternary structure, F-type ATPases have 2 components, CF(1) - the catalytic core - and CF(0) - the membrane proton channel. CF(1) has five subunits: alpha(3), beta(3), gamma(1), delta(1), epsilon(1). CF(0) has four main subunits: a(1), b(1), b'(1) and c(9-12).

It localises to the cell inner membrane. The catalysed reaction is ATP + H2O + 4 H(+)(in) = ADP + phosphate + 5 H(+)(out). In terms of biological role, produces ATP from ADP in the presence of a proton gradient across the membrane. The catalytic sites are hosted primarily by the beta subunits. The protein is ATP synthase subunit beta 1 of Chlorobium luteolum (strain DSM 273 / BCRC 81028 / 2530) (Pelodictyon luteolum).